The following is a 101-amino-acid chain: Salivary thrombin inhibitor anophelin (101 aa).

The signal sequence occupies residues 1–21; that stretch reads MASKVIVIALLCIALAAFVQG. The tract at residues 26 to 101 is disordered; it reads THGEEPEYDE…SDSSSGSTEN (76 aa). Acidic residues predominate over residues 31–40; the sequence is PEYDEDDGAD. The segment at 75 to 78 is blocks active site cleft of host thrombin in a reverse direction compared to substrates; sequence DPGR. Positions 75 to 87 are enriched in basic and acidic residues; that stretch reads DPGRRPEFLKQHN. Over residues 88–101 the composition is skewed to polar residues; that stretch reads NENQSDSSSGSTEN. Asn-90 carries N-linked (GlcNAc...) asparagine glycosylation.

The protein belongs to the anophelin family. As to quaternary structure, interacts with human F2 (thrombin); the interaction results in thrombin inhibition.

The protein localises to the secreted. In terms of biological role, salivary protein with anticoagulant activity that inhibits host thrombin (F2). The polypeptide is Salivary thrombin inhibitor anophelin (Anopheles stephensi (Indo-Pakistan malaria mosquito)).